The sequence spans 127 residues: uncharacterized protein (127 aa).

The chain crosses the membrane as a helical span at residues 85-107 (VYLGKIGFVLLHVFYLSCIAYYD).

It localises to the mitochondrion membrane. This is an uncharacterized protein from Dictyostelium discoideum (Social amoeba).